A 556-amino-acid polypeptide reads, in one-letter code: Probable glucomannan 4-beta-mannosyltransferase 3 (556 aa).

The helical transmembrane segment at 56–76 (IFVFIPILKCLVTICLVMSLL) threads the bilayer. Aspartate 159 is an active-site residue. The substrate site is built by aspartate 218 and aspartate 220. Aspartate 312 is a catalytic residue. 4 helical membrane passes run 391-411 (IVVH…TVLF), 428-448 (ITIL…FWIL), 509-529 (LVVG…GGSY), and 530-550 (FYVY…GYIG).

Belongs to the glycosyltransferase 2 family. Plant cellulose synthase-like A subfamily.

It is found in the golgi apparatus membrane. The catalysed reaction is GDP-mannose + (glucomannan)n = GDP + (glucomannan)n+1.. Probable mannan synthase which consists of a 4-beta-mannosyltransferase activity on mannan using GDP-mannose. The beta-1,4-mannan product is the backbone for galactomannan synthesis by galactomannan galactosyltransferase. Galactomannan is a noncellulosic polysaccharides of plant cell wall. The chain is Probable glucomannan 4-beta-mannosyltransferase 3 from Arabidopsis thaliana (Mouse-ear cress).